Reading from the N-terminus, the 422-residue chain is Glucose-1-phosphate adenylyltransferase 2 (422 aa).

Alpha-D-glucose 1-phosphate-binding positions include tyrosine 110, glycine 175, 190-191, and serine 208; that span reads EK.

Belongs to the bacterial/plant glucose-1-phosphate adenylyltransferase family. In terms of assembly, homotetramer.

The catalysed reaction is alpha-D-glucose 1-phosphate + ATP + H(+) = ADP-alpha-D-glucose + diphosphate. Its pathway is glycan biosynthesis; glycogen biosynthesis. Involved in the biosynthesis of ADP-glucose, a building block required for the elongation reactions to produce glycogen. Catalyzes the reaction between ATP and alpha-D-glucose 1-phosphate (G1P) to produce pyrophosphate and ADP-Glc. This is Glucose-1-phosphate adenylyltransferase 2 from Alkalilimnicola ehrlichii (strain ATCC BAA-1101 / DSM 17681 / MLHE-1).